Reading from the N-terminus, the 110-residue chain is MSMTDLLNAEDIKKAVGAFSATDSFDHKKFFQMVGLKKKSADDVKKVFHMLDKDKSGFIEEDELGFILKGFSPDARDLSAKETKMLMAAGDKDGDGKIGVDEFSTLVAES.

Residue S2 is modified to N-acetylserine. Residues S2 and S24 each carry the phosphoserine modification. 2 EF-hand domains span residues 39 to 74 (KSAD…FSPD) and 78 to 110 (LSAK…VAES). Ca(2+) contacts are provided by D52, D54, S56, F58, E60, E63, D91, D93, D95, K97, and E102.

In terms of biological role, in muscle, parvalbumin is thought to be involved in relaxation after contraction. It binds two calcium ions. In Homo sapiens (Human), this protein is Parvalbumin alpha (PVALB).